Reading from the N-terminus, the 445-residue chain is Inward rectifier potassium channel 4 (445 aa).

Topologically, residues 1 to 55 are cytoplasmic; sequence MHGHSRNGQAHVPRRKRRNRFVKKNGQCNVYFANLSNKSQRYMADIFTTCVDTRW. Residues 56 to 80 form a helical membrane-spanning segment; it reads RYMLMIFSAAFLVSWLFFGLLFWCI. Residues 81-120 are Extracellular-facing; it reads AFFHGDLEASPGVPAAGGPAAGGGGAAPVAPKPCIMHVNG. The segment at 91–111 is val/Gly/Ala/Pro stretch; the sequence is PGVPAAGGPAAGGGGAAPVAP. Positions 121 to 132 form an intramembrane region, helical; Pore-forming; it reads FLGAFLFSVETQ. Residues 133 to 139 constitute an intramembrane region (pore-forming); that stretch reads TTIGYGF. Residues 134–139 carry the Selectivity filter motif; the sequence is TIGYGF. Residues 140–148 lie on the Extracellular side of the membrane; the sequence is RCVTEECPL. Residues 149–170 form a helical membrane-spanning segment; sequence AVIAVVVQSIVGCVIDSFMIGT. Topologically, residues 171–445 are cytoplasmic; sequence IMAKMARPKK…NISYRRESAI (275 aa). A PDZ-binding motif is present at residues 443–445; the sequence is SAI.

Belongs to the inward rectifier-type potassium channel (TC 1.A.2.1) family. KCNJ4 subfamily. Homomultimeric and heteromultimeric association with KCNJ2 and KCNJ12. Interacts with DLG2 and DLG4. Associates, via its PDZ-recognition domain, with a complex containing LIN7A, LIN7B, LIN7C, DLG1, CASK and APBA1. Interacts with TAX1BP3. TAX1BP3 competes with LIN7 family members for KCNJ4 binding. As to expression, heart, skeletal muscle, and several different brain regions including the hippocampus.

It localises to the cell membrane. The protein resides in the postsynaptic cell membrane. It is found in the cytoplasmic vesicle membrane. It catalyses the reaction K(+)(in) = K(+)(out). In terms of biological role, inward rectifier potassium channels are characterized by a greater tendency to allow potassium to flow into the cell rather than out of it. Their voltage dependence is regulated by the concentration of extracellular potassium; as external potassium is raised, the voltage range of the channel opening shifts to more positive voltages. The inward rectification is mainly due to the blockage of outward current by internal magnesium. Can be blocked by extracellular barium and cesium. The protein is Inward rectifier potassium channel 4 (KCNJ4) of Homo sapiens (Human).